The chain runs to 76 residues: Bomanin Tailed 2 (76 aa).

Residues 1-22 (MKALQVAGTLMLLFCLLAAVNA) form the signal peptide. A propeptide spans 23 to 24 (TP) (removed by a dipeptidylpeptidase). An intrachain disulfide couples C33 to C36.

It belongs to the bomanin family.

The protein localises to the secreted. Functionally, secreted immune-induced peptide induced by Toll signaling. Has a role in resistance to bacterial and fungal infections. The strength of antimicrobial activity appears to correlate with the overall level of expression. This chain is Bomanin Tailed 2, found in Drosophila melanogaster (Fruit fly).